The following is a 182-amino-acid chain: UPF0397 protein BCE_2667 (182 aa).

A run of 5 helical transmembrane segments spans residues Val-9–Ile-29, Ala-40–Ile-60, Trp-71–Ile-91, Ile-114–Val-134, and Ile-142–Leu-162.

This sequence belongs to the UPF0397 family.

The protein localises to the cell membrane. The polypeptide is UPF0397 protein BCE_2667 (Bacillus cereus (strain ATCC 10987 / NRS 248)).